The sequence spans 311 residues: Methionyl-tRNA formyltransferase (311 aa).

117–120 (SLLP) is a (6S)-5,6,7,8-tetrahydrofolate binding site.

It belongs to the Fmt family.

The catalysed reaction is L-methionyl-tRNA(fMet) + (6R)-10-formyltetrahydrofolate = N-formyl-L-methionyl-tRNA(fMet) + (6S)-5,6,7,8-tetrahydrofolate + H(+). Attaches a formyl group to the free amino group of methionyl-tRNA(fMet). The formyl group appears to play a dual role in the initiator identity of N-formylmethionyl-tRNA by promoting its recognition by IF2 and preventing the misappropriation of this tRNA by the elongation apparatus. The sequence is that of Methionyl-tRNA formyltransferase from Bordetella avium (strain 197N).